The chain runs to 705 residues: Phosphoribosylformylglycinamidine synthase subunit PurL (705 aa).

Residue H32 is part of the active site. Residue Y35 coordinates ATP. Residue E76 participates in Mg(2+) binding. Residues 77–80 (SHNH) and R99 contribute to the substrate site. The active-site Proton acceptor is the H78. D100 contacts Mg(2+). A substrate-binding site is contributed by Q224. D252 serves as a coordination point for Mg(2+). 296–298 (ESQ) contributes to the substrate binding site. D471 and G508 together coordinate ATP. Position 509 (N509) interacts with Mg(2+). S511 contacts substrate.

It belongs to the FGAMS family. As to quaternary structure, monomer. Part of the FGAM synthase complex composed of 1 PurL, 1 PurQ and 2 PurS subunits.

It localises to the cytoplasm. The catalysed reaction is N(2)-formyl-N(1)-(5-phospho-beta-D-ribosyl)glycinamide + L-glutamine + ATP + H2O = 2-formamido-N(1)-(5-O-phospho-beta-D-ribosyl)acetamidine + L-glutamate + ADP + phosphate + H(+). The protein operates within purine metabolism; IMP biosynthesis via de novo pathway; 5-amino-1-(5-phospho-D-ribosyl)imidazole from N(2)-formyl-N(1)-(5-phospho-D-ribosyl)glycinamide: step 1/2. Its function is as follows. Part of the phosphoribosylformylglycinamidine synthase complex involved in the purines biosynthetic pathway. Catalyzes the ATP-dependent conversion of formylglycinamide ribonucleotide (FGAR) and glutamine to yield formylglycinamidine ribonucleotide (FGAM) and glutamate. The FGAM synthase complex is composed of three subunits. PurQ produces an ammonia molecule by converting glutamine to glutamate. PurL transfers the ammonia molecule to FGAR to form FGAM in an ATP-dependent manner. PurS interacts with PurQ and PurL and is thought to assist in the transfer of the ammonia molecule from PurQ to PurL. This Pyrococcus abyssi (strain GE5 / Orsay) protein is Phosphoribosylformylglycinamidine synthase subunit PurL.